We begin with the raw amino-acid sequence, 315 residues long: MMAEREEDDDTEEAWMQLRPTEPLPSQCCGSGCSPCVFDLYHRDLARWEAAQASKDRSLLRGPESQSCPSKLNPETFVAFCIIAMDRLTKDTYRVRFALPGNSQLGLRPGQHLILRGIVDDLEIQRAYTPISPANAEGYFEVLIKCYQMGLMSRYVESWRVGDTAFWRGPFGDFFYKPNQYGELLLLAAGTGLAPMVPILQSITDNENDETFVTLVGCFKTFESIYLKTFLQEQARFWNVRTFFVLSQESSSEQLPWSYQEKTHFGHLGQDLIKELVSCCRRKPFALVCGSAEFTKDIARCLLCAGLTEDSYFLF.

An Oxidoreductase-like domain is found at 19-55; the sequence is RPTEPLPSQCCGSGCSPCVFDLYHRDLARWEAAQASK. One can recognise an FAD-binding FR-type domain in the interval 75-177; sequence ETFVAFCIIA…RGPFGDFFYK (103 aa). FAD-binding positions include 157 to 172 and 182 to 214; these read ESWR…GPFG and GELL…TFVT.

This sequence belongs to the flavoprotein pyridine nucleotide cytochrome reductase family. The cofactor is FAD.

It catalyses the reaction 2 Fe(III)-[cytochrome b5] + NADH = 2 Fe(II)-[cytochrome b5] + NAD(+) + H(+). Its function is as follows. NADH-cytochrome b5 reductases are involved in desaturation and elongation of fatty acids, cholesterol biosynthesis, drug metabolism, and, in erythrocyte, methemoglobin reduction. The polypeptide is NADH-cytochrome b5 reductase-like (CYB5RL) (Homo sapiens (Human)).